Here is a 355-residue protein sequence, read N- to C-terminus: S-adenosylmethionine:tRNA ribosyltransferase-isomerase (355 aa).

The protein belongs to the QueA family. As to quaternary structure, monomer.

It is found in the cytoplasm. It catalyses the reaction 7-aminomethyl-7-carbaguanosine(34) in tRNA + S-adenosyl-L-methionine = epoxyqueuosine(34) in tRNA + adenine + L-methionine + 2 H(+). The protein operates within tRNA modification; tRNA-queuosine biosynthesis. Transfers and isomerizes the ribose moiety from AdoMet to the 7-aminomethyl group of 7-deazaguanine (preQ1-tRNA) to give epoxyqueuosine (oQ-tRNA). In Aeromonas salmonicida (strain A449), this protein is S-adenosylmethionine:tRNA ribosyltransferase-isomerase.